Consider the following 147-residue polypeptide: Gastrula-specific protein 17 (147 aa).

The disordered stretch occupies residues 1–119; sequence MSQNLDFLAL…TQVYGNHQPG (119 aa). Polar residues-rich tracts occupy residues 20 to 36, 45 to 57, and 74 to 88; these read SPTS…STPP, RQIS…YTNP, and LLQN…SPTA.

The protein is Gastrula-specific protein 17 (gs17) of Xenopus laevis (African clawed frog).